A 318-amino-acid polypeptide reads, in one-letter code: HPr kinase/phosphorylase (318 aa).

Catalysis depends on residues histidine 143 and lysine 164. 158–165 (GKSGVGKS) is an ATP binding site. Serine 165 serves as a coordination point for Mg(2+). The active-site Proton acceptor; for phosphorylation activity. Proton donor; for dephosphorylation activity is aspartate 182. The important for the catalytic mechanism of both phosphorylation and dephosphorylation stretch occupies residues 206-215 (MEIRGLGILN). Glutamate 207 is a Mg(2+) binding site. The active site involves arginine 248. The segment at 269–274 (PVKPGR) is important for the catalytic mechanism of dephosphorylation.

The protein belongs to the HPrK/P family. As to quaternary structure, homohexamer. The cofactor is Mg(2+).

It catalyses the reaction [HPr protein]-L-serine + ATP = [HPr protein]-O-phospho-L-serine + ADP + H(+). The enzyme catalyses [HPr protein]-O-phospho-L-serine + phosphate + H(+) = [HPr protein]-L-serine + diphosphate. Functionally, catalyzes the ATP- as well as the pyrophosphate-dependent phosphorylation of a specific serine residue in HPr, a phosphocarrier protein of the phosphoenolpyruvate-dependent sugar phosphotransferase system (PTS). HprK/P also catalyzes the pyrophosphate-producing, inorganic phosphate-dependent dephosphorylation (phosphorolysis) of seryl-phosphorylated HPr (P-Ser-HPr). In Leptospira borgpetersenii serovar Hardjo-bovis (strain JB197), this protein is HPr kinase/phosphorylase.